Here is a 366-residue protein sequence, read N- to C-terminus: Galactoside alpha-(1,2)-fucosyltransferase 1 (366 aa).

Residues 1-8 are Cytoplasmic-facing; the sequence is MWPLSHRH. The helical; Signal-anchor for type II membrane protein transmembrane segment at 9–25 threads the bilayer; the sequence is LCLAFLLVCVLSAISFF. The Lumenal segment spans residues 26-366; it reads LHIHQDSFPH…LSPLWTLAEP (341 aa). N-linked (GlcNAc...) asparagine glycosylation is found at asparagine 66, asparagine 302, and asparagine 328.

It belongs to the glycosyltransferase 11 family.

The protein resides in the golgi apparatus. It localises to the golgi stack membrane. The catalysed reaction is a beta-D-galactosyl-(1-&gt;4)-N-acetyl-beta-D-glucosaminyl derivative + GDP-beta-L-fucose = an alpha-L-Fuc-(1-&gt;2)-beta-D-Gal-(1-&gt;4)-beta-D-GlcNAc derivative + GDP + H(+). It carries out the reaction a ganglioside GA1 + GDP-beta-L-fucose = a ganglioside Fuc-GA1 + GDP + H(+). The enzyme catalyses a beta-D-Gal-(1-&gt;3)-beta-D-GlcNAc-(1-&gt;3)-beta-D-Gal-(1-&gt;4)-beta-D-Glc-(1&lt;-&gt;1')-Cer(d18:1(4E)) + GDP-beta-L-fucose = alpha-L-fucosyl-(1-&gt;2)- beta-D-galactosyl-(1-&gt;3)-N-acetyl-beta-D-glucosaminyl-(1-&gt;3)-beta-D-galactosyl-(1-&gt;4)-beta-D-glucosyl-(1&lt;-&gt;1')-N-acylsphing-4-enine + GDP + H(+). It catalyses the reaction a neolactoside nLc4Cer(d18:1(4E)) + GDP-beta-L-fucose = a neolactoside IV(2)-alpha-Fuc-nLc4Cer(d18:1(4E)) + GDP + H(+). The catalysed reaction is a ganglioside GM1 + GDP-beta-L-fucose = a ganglioside Fuc-GM1 + GDP + H(+). It carries out the reaction beta-D-galactosyl-(1-&gt;3)-N-acetyl-D-galactosamine + GDP-beta-L-fucose = alpha-L-fucosyl-(1-&gt;2)-beta-D-galactosyl-(1-&gt;3)-N-acetyl-D-galactosamine + GDP + H(+). Its pathway is protein modification; protein glycosylation. In terms of biological role, catalyzes the transfer of L-fucose, from a guanosine diphosphate-beta-L-fucose, to the terminal galactose residue of glycoconjugates through an alpha(1,2) linkage leading to H antigen synthesis that is an intermediate substrate in the synthesis of ABO blood group antigens. H antigen is essential for maturation of the glomerular layer of the main olfactory bulb, in cell migration and early cell-cell contacts during tumor associated angiogenesis. Preferentially fucosylates soluble lactose and to a lesser extent fucosylates glycolipids gangliosides GA1 and GM1a. This chain is Galactoside alpha-(1,2)-fucosyltransferase 1, found in Lagothrix lagotricha (Brown woolly monkey).